Consider the following 484-residue polypeptide: tRNA sulfurtransferase (484 aa).

One can recognise a THUMP domain in the interval Thr-61 to Arg-165. ATP contacts are provided by residues Leu-183 to Ile-184, Lys-265, Gly-287, and Gln-296. Cys-344 and Cys-456 are disulfide-bonded. A Rhodanese domain is found at Leu-404 to Ser-484. Cys-456 functions as the Cysteine persulfide intermediate in the catalytic mechanism.

This sequence belongs to the ThiI family.

It is found in the cytoplasm. It catalyses the reaction [ThiI sulfur-carrier protein]-S-sulfanyl-L-cysteine + a uridine in tRNA + 2 reduced [2Fe-2S]-[ferredoxin] + ATP + H(+) = [ThiI sulfur-carrier protein]-L-cysteine + a 4-thiouridine in tRNA + 2 oxidized [2Fe-2S]-[ferredoxin] + AMP + diphosphate. The catalysed reaction is [ThiS sulfur-carrier protein]-C-terminal Gly-Gly-AMP + S-sulfanyl-L-cysteinyl-[cysteine desulfurase] + AH2 = [ThiS sulfur-carrier protein]-C-terminal-Gly-aminoethanethioate + L-cysteinyl-[cysteine desulfurase] + A + AMP + 2 H(+). The protein operates within cofactor biosynthesis; thiamine diphosphate biosynthesis. Catalyzes the ATP-dependent transfer of a sulfur to tRNA to produce 4-thiouridine in position 8 of tRNAs, which functions as a near-UV photosensor. Also catalyzes the transfer of sulfur to the sulfur carrier protein ThiS, forming ThiS-thiocarboxylate. This is a step in the synthesis of thiazole, in the thiamine biosynthesis pathway. The sulfur is donated as persulfide by IscS. The protein is tRNA sulfurtransferase of Histophilus somni (strain 2336) (Haemophilus somnus).